The following is a 309-amino-acid chain: Homoserine kinase (309 aa).

Residue 91–101 (PIGSGLGSSAC) participates in ATP binding.

The protein belongs to the GHMP kinase family. Homoserine kinase subfamily.

The protein resides in the cytoplasm. The enzyme catalyses L-homoserine + ATP = O-phospho-L-homoserine + ADP + H(+). The protein operates within amino-acid biosynthesis; L-threonine biosynthesis; L-threonine from L-aspartate: step 4/5. In terms of biological role, catalyzes the ATP-dependent phosphorylation of L-homoserine to L-homoserine phosphate. This Photorhabdus laumondii subsp. laumondii (strain DSM 15139 / CIP 105565 / TT01) (Photorhabdus luminescens subsp. laumondii) protein is Homoserine kinase.